The primary structure comprises 134 residues: Ribosome-binding factor A (134 aa).

The protein belongs to the RbfA family. In terms of assembly, monomer. Binds 30S ribosomal subunits, but not 50S ribosomal subunits or 70S ribosomes.

It is found in the cytoplasm. Functionally, one of several proteins that assist in the late maturation steps of the functional core of the 30S ribosomal subunit. Associates with free 30S ribosomal subunits (but not with 30S subunits that are part of 70S ribosomes or polysomes). Required for efficient processing of 16S rRNA. May interact with the 5'-terminal helix region of 16S rRNA. This is Ribosome-binding factor A from Psychrobacter cryohalolentis (strain ATCC BAA-1226 / DSM 17306 / VKM B-2378 / K5).